Here is a 618-residue protein sequence, read N- to C-terminus: uncharacterized protein (618 aa).

Positions 1–29 (MSFLVLPPEVNSALMFAGAGSGPTLAAAA) are cleaved as a signal peptide. The interval 598–618 (SGDNSSGGFNAGNDQSGFFDG) is disordered.

It belongs to the mycobacterial PPE family.

This is an uncharacterized protein from Mycobacterium tuberculosis (strain ATCC 25618 / H37Rv).